The primary structure comprises 405 residues: MAVKTLKDLLDEGVDGRHVIVRSDFNVPLNDDREITDKGRIIASLPTLKALSEGGAKVIVMAHLGRPKGEVNEKYSLAPVAEALSDELGQYVALAADVVGEDAHERANGLTEGDILLLENVRFDPRETSKDEAERTAFAQELAALAADNGAFVSDGFGVVHRAQTSVYDIAKLLPHYAGGLVETEISVLEKIAESPEAPYVVVLGGSKVSDKIGVIEALAAKADKIIVGGGMCYTFLAAQGHNVQQSLLQEEMKETCTDLLARFGDKIVLPVDLVAASEFNKDAEKQIVDLDSIPEGWMSLDIGPESVKNFGEVLSTAKTIFWNGPMGVFEFAAFSEGTRGIAQAIIDATAGNDAFSVVGGGDSAASVRVLGLNEDGFSHISTGGGASLEYLEGKELPGVAILAQ.

Residues 24–26, arginine 40, 63–66, arginine 122, and arginine 162 each bind substrate; these read DFN and HLGR. Residues lysine 212, glutamate 331, and 361–364 each bind ATP; that span reads GGDS.

It belongs to the phosphoglycerate kinase family. In terms of assembly, monomer.

It is found in the cytoplasm. It carries out the reaction (2R)-3-phosphoglycerate + ATP = (2R)-3-phospho-glyceroyl phosphate + ADP. Its pathway is carbohydrate degradation; glycolysis; pyruvate from D-glyceraldehyde 3-phosphate: step 2/5. This is Phosphoglycerate kinase from Corynebacterium glutamicum (strain R).